The sequence spans 434 residues: Mannose-6-phosphate isomerase (434 aa).

The Zn(2+) site is built by Gln109, His111, and Glu136. Over residues 181 to 191 (SLGLPTSQPPD) the composition is skewed to polar residues. A disordered region spans residues 181–200 (SLGLPTSQPPDTSLFKPTES). Zn(2+) is bound at residue His291. Arg310 is an active-site residue.

Belongs to the mannose-6-phosphate isomerase type 1 family. Zn(2+) is required as a cofactor.

Its subcellular location is the cytoplasm. The catalysed reaction is D-mannose 6-phosphate = D-fructose 6-phosphate. The protein operates within nucleotide-sugar biosynthesis; GDP-alpha-D-mannose biosynthesis; alpha-D-mannose 1-phosphate from D-fructose 6-phosphate: step 1/2. Functionally, involved in the synthesis of the GDP-mannose and dolichol-phosphate-mannose required for a number of critical mannosyl transfer reactions. This chain is Mannose-6-phosphate isomerase (MAN1), found in Cryptococcus neoformans var. neoformans serotype D (strain JEC21 / ATCC MYA-565) (Filobasidiella neoformans).